The primary structure comprises 632 residues: tRNA uridine 5-carboxymethylaminomethyl modification enzyme MnmG (632 aa).

Residues 15-20 (GAGHAG), Ile-127, and Ser-182 each bind FAD. 276–290 (GPRYCPSIEDKIVRF) is an NAD(+) binding site. Residue Gln-373 participates in FAD binding.

It belongs to the MnmG family. As to quaternary structure, homodimer. Heterotetramer of two MnmE and two MnmG subunits. Requires FAD as cofactor.

It is found in the cytoplasm. In terms of biological role, NAD-binding protein involved in the addition of a carboxymethylaminomethyl (cmnm) group at the wobble position (U34) of certain tRNAs, forming tRNA-cmnm(5)s(2)U34. The polypeptide is tRNA uridine 5-carboxymethylaminomethyl modification enzyme MnmG (Streptococcus pyogenes serotype M1).